The chain runs to 261 residues: tRNA U34 carboxymethyltransferase (261 aa).

Residues Lys-25, Trp-39, Lys-44, Gly-63, 114–115, Tyr-135, and Arg-250 contribute to the carboxy-S-adenosyl-L-methionine site; that span reads VE.

Belongs to the class I-like SAM-binding methyltransferase superfamily. CmoB family. As to quaternary structure, homotetramer.

It catalyses the reaction carboxy-S-adenosyl-L-methionine + 5-hydroxyuridine(34) in tRNA = 5-carboxymethoxyuridine(34) in tRNA + S-adenosyl-L-homocysteine + H(+). Functionally, catalyzes carboxymethyl transfer from carboxy-S-adenosyl-L-methionine (Cx-SAM) to 5-hydroxyuridine (ho5U) to form 5-carboxymethoxyuridine (cmo5U) at position 34 in tRNAs. In Helicobacter pylori (strain P12), this protein is tRNA U34 carboxymethyltransferase.